The sequence spans 322 residues: MSGELPPNINIKEPRWDQSTFIGRAKHFFTVTDPRNILLTNAQLEAARKVVHDYRQGIVPSGLTENELWRAKYIYDSAFHPDTGEKMILIGRMSAQVPMNMTITGCMMTFYRTTPAVLFWQWVNQSFNAVVNYTNRSGDAPLTVNELGTAYVSATTGAVATALGLNALTKRVSPLVGRFVPFAAVAAANCINIPLMRQRELKVGIPVTDENGNRLGESASAAKQAITQVVVSRILMAAPGMAIPPFIMNTLEKKAFLKRFPWMSAPVQVGIVGFCLVFATPLCCALFPQKSSMSVTSLEAELQARIRETYPELRRVYFNKGL.

At Ser2 the chain carries N-acetylserine. At 2-102 the chain is on the mitochondrial matrix side; it reads SGELPPNINI…MSAQVPMNMT (101 aa). A helical membrane pass occupies residues 103 to 120; sequence ITGCMMTFYRTTPAVLFW. At 121–146 the chain is on the mitochondrial intermembrane side; that stretch reads QWVNQSFNAVVNYTNRSGDAPLTVNE. A helical transmembrane segment spans residues 147–167; the sequence is LGTAYVSATTGAVATALGLNA. Over 168 to 174 the chain is Mitochondrial matrix; the sequence is LTKRVSP. The helical transmembrane segment at 175–195 threads the bilayer; sequence LVGRFVPFAAVAAANCINIPL. The Mitochondrial intermembrane segment spans residues 196–228; that stretch reads MRQRELKVGIPVTDENGNRLGESASAAKQAITQ. The helical transmembrane segment at 229–249 threads the bilayer; it reads VVVSRILMAAPGMAIPPFIMN. Residues 250–266 lie on the Mitochondrial matrix side of the membrane; that stretch reads TLEKKAFLKRFPWMSAP. A helical transmembrane segment spans residues 267-287; the sequence is VQVGIVGFCLVFATPLCCALF. The Mitochondrial intermembrane portion of the chain corresponds to 288–322; sequence PQKSSMSVTSLEAELQARIRETYPELRRVYFNKGL.

The protein belongs to the sideroflexin family.

The protein resides in the mitochondrion inner membrane. The catalysed reaction is L-serine(in) = L-serine(out). It carries out the reaction L-alanine(in) = L-alanine(out). The enzyme catalyses L-cysteine(in) = L-cysteine(out). Its function is as follows. Amino acid transporter importing serine, an essential substrate of the mitochondrial branch of the one-carbon pathway, into mitochondria. Mitochondrial serine is then converted to glycine and formate, which exits to the cytosol where it is used to generate the charged folates that serve as one-carbon donors. May also transport other amino acids including alanine and cysteine. In Ovis aries (Sheep), this protein is Sideroflexin-1 (SFXN1).